Here is a 603-residue protein sequence, read N- to C-terminus: UPF0313 protein MJ1155 (603 aa).

The Radical SAM core domain occupies 285 to 557 (GIVPVQFSVV…KIQKAICLYR (273 aa)). [4Fe-4S] cluster-binding residues include cysteine 299, cysteine 303, and cysteine 306.

This sequence belongs to the UPF0313 family. The cofactor is [4Fe-4S] cluster.

This chain is UPF0313 protein MJ1155, found in Methanocaldococcus jannaschii (strain ATCC 43067 / DSM 2661 / JAL-1 / JCM 10045 / NBRC 100440) (Methanococcus jannaschii).